The sequence spans 419 residues: 3-isopropylmalate dehydratase large subunit (419 aa).

C300, C360, and C363 together coordinate [4Fe-4S] cluster.

This sequence belongs to the aconitase/IPM isomerase family. LeuC type 2 subfamily. Heterodimer of LeuC and LeuD. Requires [4Fe-4S] cluster as cofactor.

It carries out the reaction (2R,3S)-3-isopropylmalate = (2S)-2-isopropylmalate. The protein operates within amino-acid biosynthesis; L-leucine biosynthesis; L-leucine from 3-methyl-2-oxobutanoate: step 2/4. Catalyzes the isomerization between 2-isopropylmalate and 3-isopropylmalate, via the formation of 2-isopropylmaleate. The chain is 3-isopropylmalate dehydratase large subunit from Clostridium botulinum (strain Alaska E43 / Type E3).